Here is a 419-residue protein sequence, read N- to C-terminus: Histone acetyltransferase type B subunit 2 (419 aa).

WD repeat units lie at residues 131 to 171 (PHDG…VEAL), 177 to 217 (YHTE…KNIK), 225 to 265 (AHTD…IIHN), 267 to 307 (NTKK…NPLY), and 311 to 351 (GHED…AEQT). The segment at 353-357 (DEIED) is interaction with the histone H4 N-terminus. Residues 368 to 408 (GHKTSINDIAVNPNINWLVASAEEDNIVQIWKCSSNIPRIG) form a WD 6 repeat.

Belongs to the WD repeat RBAP46/RBAP48/MSI1 family. Component of the HAT-B complex composed of at least HAT1 and HAT2. The HAT-B complex binds to histone H4 tail.

It localises to the cytoplasm. Its subcellular location is the nucleus. Its function is as follows. Regulatory subunit of the histone acetylase B (HAT-B) complex. The complex acetylates Lys-12 of histone H4 which is required for telomeric silencing. The protein is Histone acetyltransferase type B subunit 2 (HAT2) of Candida glabrata (strain ATCC 2001 / BCRC 20586 / JCM 3761 / NBRC 0622 / NRRL Y-65 / CBS 138) (Yeast).